Here is a 189-residue protein sequence, read N- to C-terminus: dCTP deaminase (189 aa).

DCTP contacts are provided by residues 112-117, 136-138, Gln157, Tyr171, and Gln181; these read KSTYAR and TLE. Glu138 (proton donor/acceptor) is an active-site residue.

It belongs to the dCTP deaminase family. As to quaternary structure, homotrimer.

It carries out the reaction dCTP + H2O + H(+) = dUTP + NH4(+). It participates in pyrimidine metabolism; dUMP biosynthesis; dUMP from dCTP (dUTP route): step 1/2. Functionally, catalyzes the deamination of dCTP to dUTP. This Burkholderia orbicola (strain MC0-3) protein is dCTP deaminase.